A 395-amino-acid polypeptide reads, in one-letter code: Putative pyridoxal phosphate-dependent acyltransferase (395 aa).

110 to 111 is a binding site for pyridoxal 5'-phosphate; sequence GF. Residue His-135 coordinates substrate. Pyridoxal 5'-phosphate contacts are provided by residues Ser-185, 210-213, and 240-243; these read DDAH and TLSK. Lys-243 is subject to N6-(pyridoxal phosphate)lysine. A substrate-binding site is contributed by Thr-357.

The protein belongs to the class-II pyridoxal-phosphate-dependent aminotransferase family. Homodimer. Pyridoxal 5'-phosphate is required as a cofactor.

The protein is Putative pyridoxal phosphate-dependent acyltransferase of Staphylococcus aureus (strain Mu50 / ATCC 700699).